The sequence spans 107 residues: UPF0060 membrane protein Atu1058 (107 aa).

4 helical membrane-spanning segments follow: residues 5 to 25, 32 to 52, 59 to 79, and 85 to 105; these read LIYV…WAWL, WILL…TLVA, AYAA…WGVE, and RWDI…LFGP.

The protein belongs to the UPF0060 family.

The protein localises to the cell inner membrane. The sequence is that of UPF0060 membrane protein Atu1058 from Agrobacterium fabrum (strain C58 / ATCC 33970) (Agrobacterium tumefaciens (strain C58)).